Reading from the N-terminus, the 320-residue chain is o-succinylbenzoate synthase (320 aa).

The active-site Proton donor is the Lys133. The Mg(2+) site is built by Asp161, Glu190, and Asp213. Lys235 (proton acceptor) is an active-site residue.

This sequence belongs to the mandelate racemase/muconate lactonizing enzyme family. MenC type 1 subfamily. A divalent metal cation serves as cofactor.

The enzyme catalyses (1R,6R)-6-hydroxy-2-succinyl-cyclohexa-2,4-diene-1-carboxylate = 2-succinylbenzoate + H2O. The protein operates within quinol/quinone metabolism; 1,4-dihydroxy-2-naphthoate biosynthesis; 1,4-dihydroxy-2-naphthoate from chorismate: step 4/7. It participates in quinol/quinone metabolism; menaquinone biosynthesis. Its function is as follows. Converts 2-succinyl-6-hydroxy-2,4-cyclohexadiene-1-carboxylate (SHCHC) to 2-succinylbenzoate (OSB). The polypeptide is o-succinylbenzoate synthase (Shigella boydii serotype 18 (strain CDC 3083-94 / BS512)).